The sequence spans 207 residues: Cytidylyl-2-hydroxypropylphosphonate hydrolase (207 aa).

Residues Trp68, Arg74, Gln76, and Ser77 each coordinate CDP. 4 residues coordinate a divalent metal cation: Asn109, Asp125, Glu127, and Asp129. Residue Lys142 coordinates CDP. Lys142 (proton donor) is an active-site residue. Residue Asp143 participates in a divalent metal cation binding.

The protein belongs to the FomD family. The cofactor is Mn(2+). Co(2+) serves as cofactor.

It catalyses the reaction cytidine 5'-({hydroxy[(S)-2-hydroxypropyl]phosphonoyl}phosphate) + H2O = (S)-2-hydroxypropylphosphonate + CMP + H(+). Its pathway is antibiotic biosynthesis; fosfomycin biosynthesis. Its activity is regulated as follows. Hydrolysis of (S)-HPP-CMP is inhibited by CDP. Its function is as follows. Involved in fosfomycin biosynthesis. Catalyzes the hydrolysis of cytidylyl (S)-2-hydroxypropylphosphonate ((S)-HPP-CMP) to give (S)-2-hydroxypropylphosphonate ((S)-HPP) and CMP. Can also hydrolyze (R)-HPP-CMP and cytidylyl 2-hydroxyethylphosphonate (HEP-CMP), which is a biosynthetic intermediate before C-methylation, but the catalytic efficiency is much higher with (S)-HPP-CMP. This is Cytidylyl-2-hydroxypropylphosphonate hydrolase from Streptomyces fradiae (Streptomyces roseoflavus).